The chain runs to 143 residues: MESDRETIHLQHRHSMRGGNQRIDLNFYATKKSVAESMLDVALFMSNAMRLKSVLQQGPFAEYYTTLVTLIIVSLLLQVVISLLLVFIAILNLNEVENQRHLNKLNNAATILVFITVVINIFITAFGAHHAASMAARTSSNPI.

The Extracellular portion of the chain corresponds to 1-61 (MESDRETIHL…KSVLQQGPFA (61 aa)). Positions 26 to 38 (NFYATKKSVAESM) are helix alpha1. The segment at 39–58 (LDVALFMSNAMRLKSVLQQG) is helix alpha2. A helical membrane pass occupies residues 62-93 (EYYTTLVTLIIVSLLLQVVISLLLVFIAILNL). At 94–97 (NEVE) the chain is on the cytoplasmic side. The helical transmembrane segment at 98 to 127 (NQRHLNKLNNAATILVFITVVINIFITAFG) threads the bilayer. A cholesterol-binding site is contributed by Lys104. The Extracellular portion of the chain corresponds to 128–143 (AHHAASMAARTSSNPI).

The protein belongs to the ninjurin family. As to quaternary structure, homooligomer; in response to stimuli, homooligomerizes into filaments. In contrast to NINJ1, the filament is curved toward the intracellular space, preventing its circularization on a relatively flat membrane to mediate plasma membrane rupture: curvature is caused by cholesterol-binding at the cytoplasmic leaflet.

The protein localises to the cell membrane. Its role in unclear. In contrast to NINJ1 paralog, does not mediate plasma membrane rupture (cytolysis) downstream of necroptotic and pyroptotic programmed cell death. While it is able to oligomerize and form filaments, filaments are curved toward the intracellular space, preventing circularization to mediate plasma membrane rupture. May act as a homophilic transmembrane adhesion molecule involved in nerve regeneration. Promotes axonal growth. The polypeptide is Ninjurin-2 (Ninj2) (Mus musculus (Mouse)).